A 654-amino-acid polypeptide reads, in one-letter code: Neuroendocrine convertase 2 (654 aa).

A signal peptide spans 1 to 21 (MAAATWSWLLAPFLLLHWASA). Positions 22 to 121 (GAGGGAGGSG…VQQPGFKRVK (100 aa)) are excised as a propeptide. The Peptidase S8 domain maps to 158-483 (QWYLKNTGQN…FGVLDAGAMV (326 aa)). Residue Asn-189 is glycosylated (N-linked (GlcNAc...) asparagine). Catalysis depends on charge relay system residues Asp-196 and His-237. 2 cysteine pairs are disulfide-bonded: Cys-254/Cys-404 and Cys-346/Cys-376. Asn-312 carries N-linked (GlcNAc...) asparagine glycosylation. Residue Ser-412 is the Charge relay system of the active site. Residues 491 to 627 (SVPPRYHCEA…SLVLHGTKEA (137 aa)) form the P/Homo B domain. Cysteines 498 and 524 form a disulfide. The N-linked (GlcNAc...) asparagine glycan is linked to Asn-544.

It belongs to the peptidase S8 family. Furin subfamily. As to expression, expressed in the central nervous system (CNS) and midgut endocrine cells of third instar larva (at protein level). In the CNS, expressed in the CA-LP1 and CA-LP2 neurons which innervate the corpus allatum, and in the CC-MS2 neurons which innervate the corpora cardiaca of the ring gland. Also expressed in the CC-MS1, SP3, Tv and Va neurons. Expressed in Akh-producing cells of the corpora cardiaca. In the embryo, restricted to the final stages of embryogenesis where expression is found in anterior sensory structures and in only 168 cells in the brain and ventral nerve cord. After larvae hatch, the sensory structures and most cells in the CNS turn off or substantially reduce expression. In third instar larva, expressed at higher levels in the anterior section than in the posterior section. Little expression is detected in the adult head. In the developing eye, expressed at higher levels in pale-type R7 photoreceptor cells than in yellow-type R7 cells although expression is not seen in all pale-type R7 cells. Also expressed in outer photoreceptor cells.

It localises to the secreted. The catalysed reaction is Release of protein hormones and neuropeptides from their precursors, generally by hydrolysis of -Lys-Arg-|- bonds.. In terms of biological role, serine endopeptidase which is involved in the processing of hormone and other protein precursors at sites comprised of pairs of basic amino acid residues. Required during embryonic and larval development, probably by proteolytically processing peptide hormones involved in hatching, larval growth and larval molting. Required for the processing and activation of Akh which maintains normal hemolymph sugar levels. Has been shown in one study to be required for processing of sli into slit N-product and slit C-product in the embryo which is necessary for lateral transverse muscle elongation but has been shown in another study not to be required for sli cleavage. Required for larval hatching. Also required for normal larval wandering behavior which occurs prior to pupariation. Required during pupal development for head eversion, leg and wing disk extension, and abdominal differentiation. Required during eye development for R8 photoreceptor cell specification by regulating processing of ligands required for the BMP and activin signaling pathways. In Drosophila melanogaster (Fruit fly), this protein is Neuroendocrine convertase 2.